The sequence spans 183 residues: Glutathione-regulated potassium-efflux system ancillary protein KefG (183 aa).

The protein belongs to the NAD(P)H dehydrogenase (quinone) family. KefG subfamily. As to quaternary structure, interacts with KefB.

The protein resides in the cell inner membrane. It carries out the reaction a quinone + NADH + H(+) = a quinol + NAD(+). The enzyme catalyses a quinone + NADPH + H(+) = a quinol + NADP(+). Its function is as follows. Regulatory subunit of a potassium efflux system that confers protection against electrophiles. Required for full activity of KefB. The sequence is that of Glutathione-regulated potassium-efflux system ancillary protein KefG from Salmonella enteritidis PT4 (strain P125109).